The following is a 611-amino-acid chain: Probable potassium transport system protein Kup 1 (611 aa).

The next 12 membrane-spanning stretches (helical) occupy residues 6–26, 44–64, 90–110, 129–149, 158–178, 193–213, 237–257, 280–300, 328–348, 354–374, 385–405, and 410–430; these read LMVG…LYTM, MLSL…VAVV, LGVI…GAIT, ISPY…ALQA, LFGP…LFGI, GLSY…AVFL, WYGL…AVVV, LVAL…SGAF, IYIG…TLGF, LAAA…ILMF, LAAS…FVSA, and VLEG…LMMT.

The protein belongs to the HAK/KUP transporter (TC 2.A.72) family.

Its subcellular location is the cell inner membrane. It catalyses the reaction K(+)(in) + H(+)(in) = K(+)(out) + H(+)(out). Transport of potassium into the cell. Likely operates as a K(+):H(+) symporter. This chain is Probable potassium transport system protein Kup 1, found in Bradyrhizobium sp. (strain BTAi1 / ATCC BAA-1182).